Consider the following 199-residue polypeptide: Gene 66 protein (199 aa).

The sequence is that of Gene 66 protein (66) from Mycobacterium (Mycobacteriophage D29).